We begin with the raw amino-acid sequence, 345 residues long: Phosphoribosylformylglycinamidine cyclo-ligase (345 aa).

This sequence belongs to the AIR synthase family.

It localises to the cytoplasm. It carries out the reaction 2-formamido-N(1)-(5-O-phospho-beta-D-ribosyl)acetamidine + ATP = 5-amino-1-(5-phospho-beta-D-ribosyl)imidazole + ADP + phosphate + H(+). It participates in purine metabolism; IMP biosynthesis via de novo pathway; 5-amino-1-(5-phospho-D-ribosyl)imidazole from N(2)-formyl-N(1)-(5-phospho-D-ribosyl)glycinamide: step 2/2. This is Phosphoribosylformylglycinamidine cyclo-ligase from Escherichia fergusonii (strain ATCC 35469 / DSM 13698 / CCUG 18766 / IAM 14443 / JCM 21226 / LMG 7866 / NBRC 102419 / NCTC 12128 / CDC 0568-73).